The primary structure comprises 236 residues: 2-C-methyl-D-erythritol 4-phosphate cytidylyltransferase (236 aa).

The protein belongs to the IspD/TarI cytidylyltransferase family. IspD subfamily.

It catalyses the reaction 2-C-methyl-D-erythritol 4-phosphate + CTP + H(+) = 4-CDP-2-C-methyl-D-erythritol + diphosphate. Its pathway is isoprenoid biosynthesis; isopentenyl diphosphate biosynthesis via DXP pathway; isopentenyl diphosphate from 1-deoxy-D-xylulose 5-phosphate: step 2/6. In terms of biological role, catalyzes the formation of 4-diphosphocytidyl-2-C-methyl-D-erythritol from CTP and 2-C-methyl-D-erythritol 4-phosphate (MEP). The chain is 2-C-methyl-D-erythritol 4-phosphate cytidylyltransferase from Paraburkholderia phymatum (strain DSM 17167 / CIP 108236 / LMG 21445 / STM815) (Burkholderia phymatum).